Consider the following 396-residue polypeptide: Elongation factor Tu (396 aa).

Positions 10-206 (KPHVNVGTIG…ALDTYIPTPE (197 aa)) constitute a tr-type G domain. A G1 region spans residues 19–26 (GHVDHGKT). 19 to 26 (GHVDHGKT) is a binding site for GTP. Thr-26 contributes to the Mg(2+) binding site. The tract at residues 60–64 (GITIN) is G2. The interval 81 to 84 (DCPG) is G3. GTP is bound by residues 81–85 (DCPGH) and 136–139 (NKCD). Residues 136–139 (NKCD) form a G4 region. Positions 174 to 176 (SAK) are G5.

The protein belongs to the TRAFAC class translation factor GTPase superfamily. Classic translation factor GTPase family. EF-Tu/EF-1A subfamily. Monomer.

The protein localises to the cytoplasm. The catalysed reaction is GTP + H2O = GDP + phosphate + H(+). GTP hydrolase that promotes the GTP-dependent binding of aminoacyl-tRNA to the A-site of ribosomes during protein biosynthesis. In Burkholderia cenocepacia (strain HI2424), this protein is Elongation factor Tu.